We begin with the raw amino-acid sequence, 351 residues long: Dihydroorotate dehydrogenase (quinone) (351 aa).

Residues 67–71 (AGFDK) and T91 each bind FMN. K71 provides a ligand contact to substrate. Residue 116–120 (NAMGF) coordinates substrate. Residues N145 and N178 each contribute to the FMN site. N178 contributes to the substrate binding site. S181 acts as the Nucleophile in catalysis. Substrate is bound at residue N183. FMN-binding residues include K214 and T242. Residue 243–244 (NT) participates in substrate binding. FMN contacts are provided by residues G262, G291, and 312–313 (YS).

Belongs to the dihydroorotate dehydrogenase family. Type 2 subfamily. Monomer. The cofactor is FMN.

Its subcellular location is the cell membrane. The enzyme catalyses (S)-dihydroorotate + a quinone = orotate + a quinol. Its pathway is pyrimidine metabolism; UMP biosynthesis via de novo pathway; orotate from (S)-dihydroorotate (quinone route): step 1/1. Functionally, catalyzes the conversion of dihydroorotate to orotate with quinone as electron acceptor. The polypeptide is Dihydroorotate dehydrogenase (quinone) (Helicobacter pylori (strain Shi470)).